Consider the following 520-residue polypeptide: Non-specific phospholipase C6 (520 aa).

The N-terminal stretch at 1-31 (MKPSSASRFSLTFSHFLTLYCLLTQTHVAQG) is a signal peptide.

The protein belongs to the bacterial phospholipase C family. Expressed in roots, leaves, stems, flowers and siliques.

It localises to the secreted. The polypeptide is Non-specific phospholipase C6 (NPC6) (Arabidopsis thaliana (Mouse-ear cress)).